The chain runs to 240 residues: Ubiquinone biosynthesis O-methyltransferase (240 aa).

The S-adenosyl-L-methionine site is built by Arg44, Gly64, Asp85, and Met129.

This sequence belongs to the methyltransferase superfamily. UbiG/COQ3 family.

It catalyses the reaction a 3-demethylubiquinol + S-adenosyl-L-methionine = a ubiquinol + S-adenosyl-L-homocysteine + H(+). The enzyme catalyses a 3-(all-trans-polyprenyl)benzene-1,2-diol + S-adenosyl-L-methionine = a 2-methoxy-6-(all-trans-polyprenyl)phenol + S-adenosyl-L-homocysteine + H(+). Its pathway is cofactor biosynthesis; ubiquinone biosynthesis. O-methyltransferase that catalyzes the 2 O-methylation steps in the ubiquinone biosynthetic pathway. The protein is Ubiquinone biosynthesis O-methyltransferase of Escherichia coli (strain K12 / MC4100 / BW2952).